The following is a 468-amino-acid chain: ATP synthase subunit beta (468 aa).

155 to 162 (GGAGVGKT) serves as a coordination point for ATP.

Belongs to the ATPase alpha/beta chains family. In terms of assembly, F-type ATPases have 2 components, CF(1) - the catalytic core - and CF(0) - the membrane proton channel. CF(1) has five subunits: alpha(3), beta(3), gamma(1), delta(1), epsilon(1). CF(0) has three main subunits: a(1), b(2) and c(9-12). The alpha and beta chains form an alternating ring which encloses part of the gamma chain. CF(1) is attached to CF(0) by a central stalk formed by the gamma and epsilon chains, while a peripheral stalk is formed by the delta and b chains.

Its subcellular location is the cell membrane. The enzyme catalyses ATP + H2O + 4 H(+)(in) = ADP + phosphate + 5 H(+)(out). Functionally, produces ATP from ADP in the presence of a proton gradient across the membrane. The catalytic sites are hosted primarily by the beta subunits. This chain is ATP synthase subunit beta, found in Streptococcus agalactiae serotype III (strain NEM316).